A 22-amino-acid chain; its full sequence is Zinc metalloproteinase oxiagin (22 aa).

The Peptidase M12B domain occupies 14 to 22 (CYIEFYVVV).

This sequence belongs to the venom metalloproteinase (M12B) family. P-III subfamily. P-IIId sub-subfamily. In terms of assembly, heterotrimer; disulfide-linked. The heterotrimer consists of 1 metalloproteinase chain and 2 lectin chains. Zn(2+) is required as a cofactor. In terms of processing, N-glycosylated. As to expression, expressed by the venom gland.

It is found in the secreted. Functionally, snake venom metalloproteinase that inhibits the classical complement pathway dose-dependently. It acts by binding to carbohydrates of IgG within the antibody-sensitized sheep erythrocytes (EA) complex, and thus prevents interaction of component C2 with immobilized C4b. Also induces cation-independent hemagglutination that can be prevented by D-galactose pretreatment. In Naja oxiana (Central Asian cobra), this protein is Zinc metalloproteinase oxiagin.